The primary structure comprises 651 residues: Transcription termination factor FttA (651 aa).

Residues 1-200 are archaeal CPSF-KH domain; the sequence is MTFLIKRETQ…ITGLGGFREV (200 aa). Residues 12-79 form a KHa region; it reads DQILRDIRAV…ISVRPDPEVL (68 aa). Positions 80-147 are KHb; it reads LPPEEAEKLI…WAPKVVRTPP (68 aa). The tract at residues 188-398 is metallo-beta-lactamase N-terminus; the sequence is WIRITGLGGF…LVMESTYGGA (211 aa). Zn(2+) contacts are provided by His-256, His-258, Asp-260, His-261, His-344, and Asp-367. A beta-Casp region spans residues 399-592; that stretch reads NDIQMPREEA…MEVHTIDGFS (194 aa). The metallo-beta-lactamase C-terminus stretch occupies residues 593–651; it reads GHADRRELMNYVAKVRPRPERIITVHGEPQKCLDLATSIHRKFGISTRAPNNLDTIRLR. A Zn(2+)-binding site is contributed by His-618.

The protein belongs to the metallo-beta-lactamase superfamily. RNA-metabolizing metallo-beta-lactamase-like family. FttA subfamily. Homodimer. Interacts with RNA polymerase (RNAP), interacts with the Spt4-Spt5 complex. It depends on Zn(2+) as a cofactor.

Terminates transcription on the whole genome. Termination is linked to FttA-mediated RNA cleavage and does not require NTP hydrolysis. Cleaves endonucleolytically at the RNA exit channel of RNA polymerase (RNAP); the 5'-3' exonuclease activity of this protein degrades the nascent RNA released from RNAP. In terms of biological role, has nuclease activity on single-stranded RNA. This is Transcription termination factor FttA from Pyrococcus horikoshii (strain ATCC 700860 / DSM 12428 / JCM 9974 / NBRC 100139 / OT-3).